We begin with the raw amino-acid sequence, 366 residues long: UDP-N-acetylglucosamine--N-acetylmuramyl-(pentapeptide) pyrophosphoryl-undecaprenol N-acetylglucosamine transferase (366 aa).

Residues 22-24 (TGG), Asn-134, Arg-170, Ser-198, Ile-253, and Gln-298 each bind UDP-N-acetyl-alpha-D-glucosamine.

This sequence belongs to the glycosyltransferase 28 family. MurG subfamily.

It is found in the cell inner membrane. The catalysed reaction is di-trans,octa-cis-undecaprenyl diphospho-N-acetyl-alpha-D-muramoyl-L-alanyl-D-glutamyl-meso-2,6-diaminopimeloyl-D-alanyl-D-alanine + UDP-N-acetyl-alpha-D-glucosamine = di-trans,octa-cis-undecaprenyl diphospho-[N-acetyl-alpha-D-glucosaminyl-(1-&gt;4)]-N-acetyl-alpha-D-muramoyl-L-alanyl-D-glutamyl-meso-2,6-diaminopimeloyl-D-alanyl-D-alanine + UDP + H(+). It participates in cell wall biogenesis; peptidoglycan biosynthesis. In terms of biological role, cell wall formation. Catalyzes the transfer of a GlcNAc subunit on undecaprenyl-pyrophosphoryl-MurNAc-pentapeptide (lipid intermediate I) to form undecaprenyl-pyrophosphoryl-MurNAc-(pentapeptide)GlcNAc (lipid intermediate II). The polypeptide is UDP-N-acetylglucosamine--N-acetylmuramyl-(pentapeptide) pyrophosphoryl-undecaprenol N-acetylglucosamine transferase (Xylella fastidiosa (strain M12)).